We begin with the raw amino-acid sequence, 154 residues long: 17.7 kDa class I heat shock protein (154 aa).

The 115-residue stretch at 40–154 (ETSAFANTRI…PDVKSIEISG (115 aa)) folds into the sHSP domain.

Belongs to the small heat shock protein (HSP20) family. In terms of assembly, forms oligomeric structures.

It is found in the cytoplasm. The polypeptide is 17.7 kDa class I heat shock protein (Solanum peruvianum (Peruvian tomato)).